Here is a 149-residue protein sequence, read N- to C-terminus: UPF0179 protein MM_0589 (149 aa).

It belongs to the UPF0179 family.

The polypeptide is UPF0179 protein MM_0589 (Methanosarcina mazei (strain ATCC BAA-159 / DSM 3647 / Goe1 / Go1 / JCM 11833 / OCM 88) (Methanosarcina frisia)).